The following is a 341-amino-acid chain: tRNA N6-adenosine threonylcarbamoyltransferase (341 aa).

2 residues coordinate Fe cation: histidine 115 and histidine 119. Substrate is bound by residues 138-142, aspartate 171, glycine 184, and asparagine 276; that span reads LVSGG. Residue aspartate 304 participates in Fe cation binding.

The protein belongs to the KAE1 / TsaD family. It depends on Fe(2+) as a cofactor.

It is found in the cytoplasm. The enzyme catalyses L-threonylcarbamoyladenylate + adenosine(37) in tRNA = N(6)-L-threonylcarbamoyladenosine(37) in tRNA + AMP + H(+). Its function is as follows. Required for the formation of a threonylcarbamoyl group on adenosine at position 37 (t(6)A37) in tRNAs that read codons beginning with adenine. Is involved in the transfer of the threonylcarbamoyl moiety of threonylcarbamoyl-AMP (TC-AMP) to the N6 group of A37, together with TsaE and TsaB. TsaD likely plays a direct catalytic role in this reaction. The protein is tRNA N6-adenosine threonylcarbamoyltransferase of Stenotrophomonas maltophilia (strain R551-3).